We begin with the raw amino-acid sequence, 60 residues long: Bacteriochlorophyll c-binding protein (60 aa).

At Met1 the chain carries N-formylmethionine. His25 contacts a bacteriochlorophyll c.

This sequence belongs to the BChl C/E-binding protein family.

The protein localises to the chlorosome. It is found in the chlorosome envelope. Its function is as follows. Component of the photosynthetic apparatus. The light harvesting B740 complex binds bacteriochlorophyll c. This chain is Bacteriochlorophyll c-binding protein (csmA), found in Pelodictyon luteolum.